A 243-amino-acid polypeptide reads, in one-letter code: Outer membrane protein A (243 aa).

Transmembrane regions (beta stranded) follow at residues 1-8 (LTAKLGYP), 13-21 (LDIYTRLGG), 47-56 (PVFAGGLEWA), 61-68 (IATRLEYQ), and 87-95 (LLSVGVSYR). Repeat copies occupy residues 107-108 (AP), 109-110 (AP), 111-112 (AP), and 113-114 (AP). Residues 107–114 (APAPAPAP) are 4 X 2 AA tandem repeats of A-P. In terms of domain architecture, OmpA-like spans 116 to 243 (VQTKHFTLKS…RRVEIEVKGI (128 aa)). C217 and C229 are oxidised to a cystine.

It belongs to the outer membrane OOP (TC 1.B.6) superfamily. OmpA family. In terms of assembly, monomer and homodimer.

It is found in the cell outer membrane. Its function is as follows. With TolR probably plays a role in maintaining the position of the peptidoglycan cell wall in the periplasm. Acts as a porin with low permeability that allows slow penetration of small solutes; an internal gate slows down solute passage. In Atlantibacter hermannii (Escherichia hermannii), this protein is Outer membrane protein A.